Consider the following 440-residue polypeptide: Fibulin-7 (440 aa).

The N-terminal stretch at 1 to 24 is a signal peptide; sequence MGPGSQRALFLLLLLLASPGARAF. The stretch at 28–73 forms a coiled coil; that stretch reads LNKQQLLTTIRQLQQLLKGQETRFTEGIRNMKSRLAALQNTVNKMT. Residues 79 to 136 enclose the Sushi domain; that stretch reads VSCPALEAPPDGKKFGSKYLVDHEVYFTCNPGFQLVGPSSVVCLANGSWTGEQPRCRD. 11 disulfides stabilise this stretch: cysteine 81–cysteine 121, cysteine 107–cysteine 134, cysteine 140–cysteine 151, cysteine 145–cysteine 160, cysteine 162–cysteine 171, cysteine 229–cysteine 245, cysteine 241–cysteine 254, cysteine 256–cysteine 269, cysteine 275–cysteine 288, cysteine 282–cysteine 297, and cysteine 302–cysteine 319. N-linked (GlcNAc...) asparagine glycosylation is present at asparagine 124. The region spanning 136–172 is the EGF-like 1; calcium-binding domain; sequence DISECSSQPCHNGGTCVEGINHYRCICPPGKTGNRCQ. Residues 225 to 270 enclose the EGF-like 2; calcium-binding domain; sequence DVNECEIYGQKGRPRLCMHACVNTPGSYRCTCPSGYRILADGKSCE. The EGF-like 3; calcium-binding domain occupies 271–320; the sequence is DVDECAGPQHMCPRGTTCINTGGGFQCVNPECPEGSGNISYVKTSPFQCE. N-linked (GlcNAc...) asparagine glycosylation is present at asparagine 308.

The protein belongs to the fibulin family. Interacts with heparin, FBLN1, FN1 and DSPP. Preferentially binds dental mesenchyme cells and odontoblasts but not dental epithelial cells or nondental cells. Binding requires a heparan sulfate-containing receptor on the cell surface as well as an integrin. Post-translationally, N-glycosylated. In terms of tissue distribution, highly expressed in newborn incisors and molars. A weaker expression is seen in the brain, kidneys, muscles and bones.

The protein localises to the secreted. Its subcellular location is the extracellular space. The protein resides in the extracellular matrix. In terms of biological role, an adhesion molecule that interacts with extracellular matrix molecules in developing teeth and may play important roles in differentiation and maintenance of odontoblasts as well as in dentin formation. The sequence is that of Fibulin-7 (Fbln7) from Mus musculus (Mouse).